A 127-amino-acid chain; its full sequence is Large ribosomal subunit protein bL20 (127 aa).

The protein belongs to the bacterial ribosomal protein bL20 family.

In terms of biological role, binds directly to 23S ribosomal RNA and is necessary for the in vitro assembly process of the 50S ribosomal subunit. It is not involved in the protein synthesizing functions of that subunit. In Akkermansia muciniphila (strain ATCC BAA-835 / DSM 22959 / JCM 33894 / BCRC 81048 / CCUG 64013 / CIP 107961 / Muc), this protein is Large ribosomal subunit protein bL20.